The chain runs to 239 residues: MMDLFETNTYLFNDLRYLEEGDHGPLQHLDMSGVSPLYNGNDSPLSPGQDNVPSETGGESSGDEHVLAPPGLRSHCEGQCLMWACKICKRKSAPTDRRKAATLRERRRLKKINEAFDALKRKTVANPNQRLPKVEILRSAISYIERLQDLLQTLDEQERSQSGASDTRNDKEQNRPSGGDYRWKKASNTWPTSADHSAIINQRDGNCESSATSSLLCLSSIVSSISDDKTNLRQGVQED.

A disordered region spans residues 28–64; that stretch reads HLDMSGVSPLYNGNDSPLSPGQDNVPSETGGESSGDE. Residues 38-58 are compositionally biased toward polar residues; sequence YNGNDSPLSPGQDNVPSETGG. Positions 96–147 constitute a bHLH domain; that stretch reads DRRKAATLRERRRLKKINEAFDALKRKTVANPNQRLPKVEILRSAISYIERL. Residues 155–189 are disordered; sequence DEQERSQSGASDTRNDKEQNRPSGGDYRWKKASNT.

As to quaternary structure, efficient DNA binding requires dimerization with another bHLH protein.

The protein localises to the nucleus. Functionally, involved in muscle differentiation (myogenic factor). Induces fibroblasts to differentiate into myoblasts. Probable sequence specific DNA-binding protein. The protein is Myogenic factor 6 (myf6) of Takifugu rubripes (Japanese pufferfish).